The primary structure comprises 526 residues: Zinc finger protein Helios (526 aa).

A disordered region spans residues 28–94; the sequence is DLTSSTPNGQ…IESSEVADNR (67 aa). The segment covering 29–50 has biased composition (polar residues); it reads LTSSTPNGQHASPSHMTSTNSV. S56 is subject to Phosphoserine. The segment covering 61–77 has biased composition (basic and acidic residues); that stretch reads DRQPLSREDEIRGHDEG. A phosphoserine mark is found at S78 and S79. A Glycyl lysine isopeptide (Lys-Gly) (interchain with G-Cter in SUMO2) cross-link involves residue K95. 4 consecutive C2H2-type zinc fingers follow at residues 112–134, 140–162, 168–190, and 196–219; these read LKCD…KRSH, FHCN…IKLH, FKCP…LRTH, and HKCN…ERCH. An N6-acetyllysine modification is found at K288. A compositionally biased stretch (basic and acidic residues) spans 368–379; that stretch reads ISRETSDSHENN. The interval 368-435 is disordered; sequence ISRETSDSHE…LNPKRKQSPA (68 aa). Residues K442 and K448 each participate in a glycyl lysine isopeptide (Lys-Gly) (interchain with G-Cter in SUMO2) cross-link. 2 consecutive C2H2-type zinc fingers follow at residues 471-493 and 499-523; these read FKCE…MGCH and LECN…RGEH.

Belongs to the Ikaros C2H2-type zinc-finger protein family. In terms of assembly, can form homodimers. Interacts with IKZF4 and IKZF5. Expressed in outer hair cells (OHC) of the organ of Corti. Abundant in thymus, low expression in bone marrow and brain and no detectable expression in spleen, liver, kidney or muscle. Expressed in T-cells.

It localises to the nucleus. Its function is as follows. Transcriptional regulator required for outer hair cells (OHC) maturation and, consequently, for hearing. The sequence is that of Zinc finger protein Helios (Ikzf2) from Mus musculus (Mouse).